The primary structure comprises 777 residues: Santalene and bergamotene synthase, chloroplastic (777 aa).

The transit peptide at 1 to 36 (MIVGYRSTIITLSHPKLGNGKTISSNAIFQRSCRVR) directs the protein to the chloroplast. Positions 530 and 534 each coordinate Mg(2+). The DDXXD motif motif lies at 530–534 (DDQFD).

This sequence belongs to the terpene synthase family. Tpse subfamily. Mg(2+) is required as a cofactor. The cofactor is Mn(2+).

The protein resides in the plastid. Its subcellular location is the chloroplast. It catalyses the reaction (2Z,6Z)-farnesyl diphosphate = (+)-alpha-santalene + diphosphate. The enzyme catalyses (2Z,6Z)-farnesyl diphosphate = (+)-endo-beta-bergamotene + diphosphate. The catalysed reaction is (2Z,6Z)-farnesyl diphosphate = (1S,5S,6S)-alpha-bergamotene + diphosphate. In terms of biological role, (2Z,6Z)-farnesyl diphosphate cyclizing enzyme. Produces (+)-alpha-santalene, (+)-endo-beta-bergamotene, (-)-endo-alpha-bergamotene, and at lower amounts, (-)exo-alpha-bergamotene and (+)-epi-beta-santalene. Not able to use geranyl diphosphate, E,E-farnesyl diphosphate or E,E,E-geranylgeranyl diphosphate as substrates, but able to use Neryl diphosphate to make the monoterpene terpineol. The sequence is that of Santalene and bergamotene synthase, chloroplastic (SBS) from Solanum habrochaites (Wild tomato).